A 476-amino-acid chain; its full sequence is Bifunctional protein HldE (476 aa).

Residues 1-319 (MKISLPAFEK…EALSLSHGES (319 aa)) form a ribokinase region. Residue 195–198 (NMSE) coordinates ATP. Residue Asp264 is part of the active site. Positions 345 to 476 (MTNGCFDILH…AIIQNIMANQ (132 aa)) are cytidylyltransferase.

The protein in the N-terminal section; belongs to the carbohydrate kinase PfkB family. This sequence in the C-terminal section; belongs to the cytidylyltransferase family. Homodimer.

It carries out the reaction D-glycero-beta-D-manno-heptose 7-phosphate + ATP = D-glycero-beta-D-manno-heptose 1,7-bisphosphate + ADP + H(+). It catalyses the reaction D-glycero-beta-D-manno-heptose 1-phosphate + ATP + H(+) = ADP-D-glycero-beta-D-manno-heptose + diphosphate. It functions in the pathway nucleotide-sugar biosynthesis; ADP-L-glycero-beta-D-manno-heptose biosynthesis; ADP-L-glycero-beta-D-manno-heptose from D-glycero-beta-D-manno-heptose 7-phosphate: step 1/4. The protein operates within nucleotide-sugar biosynthesis; ADP-L-glycero-beta-D-manno-heptose biosynthesis; ADP-L-glycero-beta-D-manno-heptose from D-glycero-beta-D-manno-heptose 7-phosphate: step 3/4. Functionally, catalyzes the phosphorylation of D-glycero-D-manno-heptose 7-phosphate at the C-1 position to selectively form D-glycero-beta-D-manno-heptose-1,7-bisphosphate. Catalyzes the ADP transfer from ATP to D-glycero-beta-D-manno-heptose 1-phosphate, yielding ADP-D-glycero-beta-D-manno-heptose. The protein is Bifunctional protein HldE of Shewanella pealeana (strain ATCC 700345 / ANG-SQ1).